Here is a 500-residue protein sequence, read N- to C-terminus: ATP synthase subunit alpha (500 aa).

G168–T175 contributes to the ATP binding site.

The protein belongs to the ATPase alpha/beta chains family. F-type ATPases have 2 components, CF(1) - the catalytic core - and CF(0) - the membrane proton channel. CF(1) has five subunits: alpha(3), beta(3), gamma(1), delta(1), epsilon(1). CF(0) has three main subunits: a(1), b(2) and c(9-12). The alpha and beta chains form an alternating ring which encloses part of the gamma chain. CF(1) is attached to CF(0) by a central stalk formed by the gamma and epsilon chains, while a peripheral stalk is formed by the delta and b chains.

The protein resides in the cell membrane. It catalyses the reaction ATP + H2O + 4 H(+)(in) = ADP + phosphate + 5 H(+)(out). Functionally, produces ATP from ADP in the presence of a proton gradient across the membrane. The alpha chain is a regulatory subunit. This is ATP synthase subunit alpha from Streptococcus suis (strain 98HAH33).